The primary structure comprises 116 residues: Iron-sulfur cluster insertion protein ErpA (116 aa).

Iron-sulfur cluster-binding residues include Cys-44, Cys-108, and Cys-110.

Belongs to the HesB/IscA family. As to quaternary structure, homodimer. Requires iron-sulfur cluster as cofactor.

Functionally, required for insertion of 4Fe-4S clusters for at least IspG. The protein is Iron-sulfur cluster insertion protein ErpA of Idiomarina loihiensis (strain ATCC BAA-735 / DSM 15497 / L2-TR).